Reading from the N-terminus, the 739-residue chain is Transcription regulator protein BACH1 (739 aa).

The region spanning 34–100 is the BTB domain; the sequence is CDVTVLVEGQ…AYTAKLILSK (67 aa). Ser-196 carries the post-translational modification Phosphoserine. Disordered stretches follow at residues 287–321 and 344–391; these read MESEDTEGQDPSPQCPAEQPQGTPLPQDSAGPHGL and KTVK…RSSV. Basic and acidic residues-rich tracts occupy residues 346–364 and 376–391; these read VKTEKPLSRPDAQDEKPSE and PKEDSSSLASEDRSSV. Phosphoserine is present on Ser-448. The bZIP domain occupies 560–623; that stretch reads CIHDIRRRSK…GETKQNLTGL (64 aa). Positions 565-581 are basic motif; sequence RRRSKNRIAAQRCRKRK. Positions 585–592 are leucine-zipper; the sequence is IQNLESEI. A disordered region spans residues 679 to 708; the sequence is PPTAPPPCGRGSSAASQELVQESPPTTAAA. The segment covering 699-708 has biased composition (low complexity); that stretch reads QESPPTTAAA.

The protein belongs to the bZIP family. CNC subfamily. As to quaternary structure, heterodimer of BACH1 and MAFK. In terms of processing, ubiquitinated by the SCF(FBXL17) complex or by the by the SCF(FBXO22) complex, leading to its degradation by the proteasome. Under oxidative stress, reactive oxygen species covalently modify cysteine residues on the bZIP domain of BACH1 and release it from chromatin. If the BTB domain of BACH1 remains intact, its beta1-alpha6 degron is recognized by FBXO22, promoting its ubiquitination and degradation. If the structural integrity of the beta1-alpha6 degron is compromised, FBXL17 will transiently associate with the BACH1 BTB dimer and remodel it into stably bound monomer for ubiquitination and degradation. Ubiquitous.

It is found in the nucleus. Transcriptional regulator that acts as a repressor or activator, depending on the context. Binds to NF-E2 DNA binding sites. Plays important roles in coordinating transcription activation and repression by MAFK. Together with MAF, represses the transcription of genes under the control of the NFE2L2 oxidative stress pathway. The sequence is that of Transcription regulator protein BACH1 (Bach1) from Mus musculus (Mouse).